We begin with the raw amino-acid sequence, 248 residues long: PF03932 family protein CutC (248 aa).

It belongs to the CutC family. In terms of assembly, homodimer.

It localises to the cytoplasm. The protein is PF03932 family protein CutC of Escherichia coli O81 (strain ED1a).